Reading from the N-terminus, the 168-residue chain is Glycine-rich RNA-binding protein 2 (168 aa).

Residues 8–86 (YRCFVGGLAW…RNITVNQAQS (79 aa)) form the RRM domain. A disordered region spans residues 148–168 (GYGGGGGYGGNRGDSGGNWRN).

Functionally, possibly has a role in RNA transcription or processing during stress. This chain is Glycine-rich RNA-binding protein 2 (GRP2), found in Sorghum bicolor (Sorghum).